A 383-amino-acid polypeptide reads, in one-letter code: Succinyl-diaminopimelate desuccinylase (383 aa).

His-73 lines the Zn(2+) pocket. The active site involves Asp-75. Position 107 (Asp-107) interacts with Zn(2+). Glu-141 acts as the Proton acceptor in catalysis. Glu-142, Glu-170, and His-356 together coordinate Zn(2+).

The protein belongs to the peptidase M20A family. DapE subfamily. Homodimer. Zn(2+) is required as a cofactor. The cofactor is Co(2+).

The catalysed reaction is N-succinyl-(2S,6S)-2,6-diaminopimelate + H2O = (2S,6S)-2,6-diaminopimelate + succinate. Its pathway is amino-acid biosynthesis; L-lysine biosynthesis via DAP pathway; LL-2,6-diaminopimelate from (S)-tetrahydrodipicolinate (succinylase route): step 3/3. Its function is as follows. Catalyzes the hydrolysis of N-succinyl-L,L-diaminopimelic acid (SDAP), forming succinate and LL-2,6-diaminopimelate (DAP), an intermediate involved in the bacterial biosynthesis of lysine and meso-diaminopimelic acid, an essential component of bacterial cell walls. This chain is Succinyl-diaminopimelate desuccinylase, found in Pseudomonas fluorescens (strain Pf0-1).